Consider the following 163-residue polypeptide: Putative 4-hydroxy-4-methyl-2-oxoglutarate aldolase (163 aa).

Substrate contacts are provided by residues 76–79 (GDML) and arginine 98. Position 99 (aspartate 99) interacts with a divalent metal cation.

Belongs to the class II aldolase/RraA-like family. In terms of assembly, homotrimer. Requires a divalent metal cation as cofactor.

The enzyme catalyses 4-hydroxy-4-methyl-2-oxoglutarate = 2 pyruvate. It catalyses the reaction oxaloacetate + H(+) = pyruvate + CO2. Catalyzes the aldol cleavage of 4-hydroxy-4-methyl-2-oxoglutarate (HMG) into 2 molecules of pyruvate. Also contains a secondary oxaloacetate (OAA) decarboxylase activity due to the common pyruvate enolate transition state formed following C-C bond cleavage in the retro-aldol and decarboxylation reactions. The sequence is that of Putative 4-hydroxy-4-methyl-2-oxoglutarate aldolase from Pseudomonas entomophila (strain L48).